The sequence spans 376 residues: MHLASSLFLLATLPFGFAAGKGKGKGKDNSDVGLDVLAKKAGLKYFGAATDTPGQRERAGLEDKYPEYDRIMWHSPEFGSTTPTNGQKWLFVEPERGVFNFTEGDVVASKARQHGKLLRCHALVWHSQLAPWVEETEWTPEELRKVIVDHITAVAGHYKGQCYAWDVVNEALNEDGTYRESVFYKVLGEEYIKLAFETAAKVDPKAKLYYNDYNLEWPSAKTEGAKRIVKLLKDAKIPIHGVGLQAHLIAEQHPTLDDHIAAIRGFTQLGVEVALTELDIRLKTPATEENLALQREAYKNVVGACVQVCGCVGVTIWDFYDPFSWVPYFFEGEGAPLLWFEDFSKHPAYYGVVEALTNKTRRSKRSISDRRAKLLA.

The N-terminal stretch at 1-18 (MHLASSLFLLATLPFGFA) is a signal peptide. The GH10 domain maps to 55 to 355 (QRERAGLEDK…HPAYYGVVEA (301 aa)). Residue Asn-100 is glycosylated (N-linked (GlcNAc...) asparagine). The Proton donor role is filled by Glu-170. Glu-277 serves as the catalytic Nucleophile. Asn-358 carries an N-linked (GlcNAc...) asparagine glycan.

It belongs to the glycosyl hydrolase 10 (cellulase F) family.

The protein resides in the secreted. The enzyme catalyses Endohydrolysis of (1-&gt;4)-beta-D-xylosidic linkages in xylans.. The protein operates within glycan degradation; xylan degradation. Partial inhibition of activity is detected in the presence of Ag(+), Cu2(+) and SDS. Like most fungal xylanases, activity is completely inhibited by Hg(2+) since Hg(2+) could interact with tryptophan residues and oxidize the indole ring. Beta-mercaptoethanol enhances the enzymatic activity by counteracting the oxidation effects of the S-S linkage between cysteine residues. Endo-1,4-beta-xylanase involved in the hydrolysis of xylan, a major structural heterogeneous polysaccharide found in plant biomass representing the second most abundant polysaccharide in the biosphere, after cellulose. Is most active on birchwood xylan (defined as 100%), moderate on beechwood xylan (96.8%) and soluble wheat arabinoxylan (84.5%), and weak on insoluble wheat arabinoxylan (19.7%). Hydrolyzes substrates into a mixture of xylobiose and xylotriose, but no xylose. No activity was detected in the presence of barley beta-glucan, carboxymethyl cellulose-sodium (CMC-Na), and Avicel. Acts as an alkali-tolerant xylanase, exhibiting 68.8% of the activity at pH 9.0, and even 31.8% at pH 10.0. The sequence is that of Endo-1,4-beta-xylanase A from Humicola insolens (Soft-rot fungus).